Here is a 404-residue protein sequence, read N- to C-terminus: uncharacterized protein (404 aa).

[4Fe-4S] cluster is bound by residues C69, C75, C78, and C166. Residues Q226, Y253, E274, and D334 each coordinate S-adenosyl-L-methionine. The active-site Nucleophile is C361.

The protein belongs to the class I-like SAM-binding methyltransferase superfamily. RNA M5U methyltransferase family.

This is an uncharacterized protein from Treponema denticola (strain ATCC 35405 / DSM 14222 / CIP 103919 / JCM 8153 / KCTC 15104).